The chain runs to 345 residues: MLLREVTKEERKEFYSNEWNAKQIPDFILQNLDKREFGFDHTGEGPSDRKNSYTDVRDLEDYIKATAPYAVYSSVAFYEKPQEMEGWLGAELVFDIDAKDLPLRRCNHEPGKVCPICLNDAKEIARDTLIVLKEELGFEDVHVVYSGRGYHIRVMDGWALSLDSKSRERILSFISASEIEDHSEFRKMLLERRGWFVLNHGYPRVFRLRFGYFILRVKVEHLINFGIRKNIAKRILDNKETIYEEFVRKGILAAFPDGVGIESLAKLFALSTRFSKAYFDGRVTVDLKRILRLPSTLHSKVGLIAKYIGNNERDVMRFNPFKHAVPKFRRKEVKEEYKRFLEENF.

Active-site residues include D95 and D97. Residues C106, H108, C114, and C117 each coordinate Zn(2+). Residues 106 to 117 (CNHEPGKVCPIC) carry the Zinc knuckle motif motif. The active site involves D280.

Belongs to the eukaryotic-type primase small subunit family. In terms of assembly, heterodimer of a small subunit (PriS) and a large subunit (PriL). Mg(2+) is required as a cofactor. Requires Mn(2+) as cofactor.

In terms of biological role, catalytic subunit of DNA primase, an RNA polymerase that catalyzes the synthesis of short RNA molecules used as primers for DNA polymerase during DNA replication. The small subunit contains the primase catalytic core and has DNA synthesis activity on its own, synthesizing DNA strands up to 3 kB. Binding to the large subunit stabilizes and modulates the activity, increasing the rate of DNA synthesis while decreasing the length of the DNA fragments, and conferring RNA synthesis capability for RNA fragments up to 150 bases. The DNA polymerase activity may enable DNA primase to also catalyze primer extension after primer synthesis. May also play a role in DNA repair. Displays gap-filling and strand-displacement activities. This Pyrococcus abyssi (strain GE5 / Orsay) protein is DNA primase small subunit PriS.